The primary structure comprises 322 residues: Pre-mRNA-splicing factor NTR2 (322 aa).

A disordered region spans residues 1–30; sequence MAIKKRNKIRLPSGSPEEVGIDGSAHKPMQ. Ser-40 is modified (phosphoserine). Positions 113 to 137 are disordered; that stretch reads LLSDSSEAGSSSEGEHISSIPTRGE. The segment covering 115–132 has biased composition (low complexity); sequence SDSSEAGSSSEGEHISSI. Residues Ser-153 and Ser-197 each carry the phosphoserine modification.

As to quaternary structure, component of the NTR complex (NTC-related complex), composed of NTR1, NTR2 and PRP43. Interacts with CLF1, NTR1 and PRP43.

Its subcellular location is the cytoplasm. The protein localises to the nucleus. Functionally, involved in pre-mRNA splicing and spliceosome disassembly. Promotes release of excised lariat intron from the spliceosome by acting as a receptor for PRP43. This targeting of PRP43 leads to disassembly of the spliceosome with the separation of the U2, U5, U6 snRNPs and the NTC complex. This chain is Pre-mRNA-splicing factor NTR2 (NTR2), found in Saccharomyces cerevisiae (strain ATCC 204508 / S288c) (Baker's yeast).